The chain runs to 95 residues: Integration host factor subunit beta (95 aa).

It belongs to the bacterial histone-like protein family. Heterodimer of an alpha and a beta chain.

In terms of biological role, this protein is one of the two subunits of integration host factor, a specific DNA-binding protein that functions in genetic recombination as well as in transcriptional and translational control. This Psychromonas ingrahamii (strain DSM 17664 / CCUG 51855 / 37) protein is Integration host factor subunit beta.